Reading from the N-terminus, the 876-residue chain is Monofunctional isopimaradiene synthase, chloroplastic (876 aa).

A chloroplast-targeting transit peptide spans 1–64 (MAMPSYSSLS…YLRLGSRKII (64 aa)). Positions 628, 632, 772, 776, and 780 each coordinate Mg(2+). Residues 628–632 (DDLYD) carry the DDXXD motif motif.

The protein belongs to the terpene synthase family. Tpsd subfamily. Mg(2+) serves as cofactor.

It is found in the plastid. The protein resides in the chloroplast. The catalysed reaction is (+)-copalyl diphosphate = isopimara-7,15-diene + diphosphate. It participates in terpene metabolism; oleoresin biosynthesis. Involved in defensive oleoresin formation in conifers in response to insect attack or other injury. Involved in diterpene (C20) olefins biosynthesis. Monofunctional enzyme lacking the DXDD motif in the class II active site relevant for the cyclization of geranylgeranyl diphosphate (GGPP). Requires (+)-copalyl diphosphate ((+)-CPP) as substrate, but no activity with GGPP or ent-CPP. Isopimaradiene is the major products of the enzyme followed by sandaracopimaradiene. The chain is Monofunctional isopimaradiene synthase, chloroplastic from Pinus banksiana (Jack pine).